The sequence spans 65 residues: Large ribosomal subunit protein bL35 (65 aa).

The disordered stretch occupies residues 1 to 65; it reads MPKIKTNRAA…GRLDRMLPYL (65 aa). Basic residues predominate over residues 10–44; that stretch reads AAKRFRKTASGKYKAGHANRSHILTKKATKRKRNL. Basic and acidic residues predominate over residues 50–65; sequence VRAEDAGRLDRMLPYL.

It belongs to the bacterial ribosomal protein bL35 family.

This is Large ribosomal subunit protein bL35 from Xylella fastidiosa (strain M23).